The chain runs to 733 residues: Catalase-peroxidase (733 aa).

Positions 1 to 25 are disordered; that stretch reads MNEERKCPITGATHKPSAEKGRSNH. The span at 16 to 25 shows a compositional bias: basic and acidic residues; that stretch reads PSAEKGRSNH. A cross-link (tryptophyl-tyrosyl-methioninium (Trp-Tyr) (with M-245)) is located at residues 96 to 219; the sequence is WHSAGTYRTS…LAAVQMGLIY (124 aa). Histidine 97 acts as the Proton acceptor in catalysis. Residues 219-245 constitute a cross-link (tryptophyl-tyrosyl-methioninium (Tyr-Met) (with W-96)); sequence YVNPEGPNGKPDPLAAAKDIRETFARM. Histidine 260 lines the heme b pocket.

It belongs to the peroxidase family. Peroxidase/catalase subfamily. In terms of assembly, homodimer or homotetramer. It depends on heme b as a cofactor. In terms of processing, formation of the three residue Trp-Tyr-Met cross-link is important for the catalase, but not the peroxidase activity of the enzyme.

It carries out the reaction H2O2 + AH2 = A + 2 H2O. The enzyme catalyses 2 H2O2 = O2 + 2 H2O. Bifunctional enzyme with both catalase and broad-spectrum peroxidase activity. This Chlorobium chlorochromatii (strain CaD3) protein is Catalase-peroxidase.